Here is a 363-residue protein sequence, read N- to C-terminus: G-protein coupled receptor 4 (363 aa).

The Extracellular segment spans residues 1–8; the sequence is MGNGTWEG. An N-linked (GlcNAc...) asparagine glycan is attached at N3. Residues 9 to 45 traverse the membrane as a helical segment; it reads CHVDSRVDHLFPPSLYIFVIGVGLPTNCLALWAAYRQ. 2 cysteine pairs are disulfide-bonded: C9-C258 and C90-C168. The Cytoplasmic segment spans residues 46–49; the sequence is VRQR. Residues 50-80 traverse the membrane as a helical segment; the sequence is NELGVYLMNLSIADLLYICTLPLWVDYFLHH. Over 81-85 the chain is Extracellular; it reads DNWIH. The helical transmembrane segment at 86–121 threads the bilayer; that stretch reads GPGSCKLFGFIFYTNIYISIAFLCCISVDRYLAVAH. The Cytoplasmic portion of the chain corresponds to 122-129; it reads PLRFARLR. Residues 130 to 156 traverse the membrane as a helical segment; it reads RVKTAVAVSSVVWATELGANSVPLFHD. Residues 157-172 lie on the Extracellular side of the membrane; sequence ELFRDRYNHTFCFEKF. Residues 157-172 form an extracellular loop 2 (ECL2) region; sequence ELFRDRYNHTFCFEKF. An N-linked (GlcNAc...) asparagine glycan is attached at N164. The helical transmembrane segment at 173 to 210 threads the bilayer; sequence PMEGWVAWMNLYRVFVGFLFPWALMLLSYRGILRAVRG. Residues 211-214 lie on the Cytoplasmic side of the membrane; the sequence is SVST. A helical membrane pass occupies residues 215 to 250; it reads ERQEKAKIKRLALSLIAIVLVCFAPYHVLLLSRSAV. Over 251-260 the chain is Extracellular; sequence YLGHPWDCGF. Residues 261–289 traverse the membrane as a helical segment; that stretch reads EERVFSAYHSSLAFTSLNCVADPILYCLV. The Cytoplasmic portion of the chain corresponds to 290 to 363; it reads NEGARSDVAK…QLKMLPPPAP (74 aa). A disordered region spans residues 344-363; that stretch reads ASPPSQGDQVQLKMLPPPAP.

Belongs to the G-protein coupled receptor 1 family.

It is found in the cell membrane. With respect to regulation, activated by a network of residues that connects an extracellular-facing cavity to Glu-145, a conserved charged residue buried in the transmembrane core of the receptor. Protonation likely drives conformational changes in extracellular loop 2 (ECL2), which stabilizes movement of transmembrane 3 (TM3) and a series of rearrangements that connect the extracellular-facing cavity to Glu-145, a residue only conserved in proton-sensing G-protein coupled receptors. Its function is as follows. Proton-sensing G-protein coupled receptor activated by extracellular pH, which is required to monitor pH changes and generate adaptive reactions. Activated by an optimal pH of 6.8-7.2. Ligand binding causes a conformation change that triggers signaling via guanine nucleotide-binding proteins (G proteins) and modulates the activity of downstream effectors, such as adenylate cyclase. GPR4 is mainly coupled to G(s) G proteins and mediates activation of adenylate cyclase activity. May also couple with G(q) and G(12)/G(13) G proteins. Acts as a key regulator of respiratory sensitivity to CO2/H(+) in brain retrotrapezoid nucleus neurons: acts by mediating detection of protons generated by the formation of carbonic acid in the blood, an important mechanism to impulse to breathe. Also acts as a regulator of acid secretion in the kidney collecting duct by maintaining acid-base homeostasis in the kidney. Acidosis-induced GPR4 activation increases paracellular gap formation and permeability of vascular endothelial cells, possibly through the G(12)/G(13)/Rho GTPase signaling pathway. This is G-protein coupled receptor 4 (GPR4) from Sus scrofa (Pig).